A 639-amino-acid polypeptide reads, in one-letter code: Chaperone protein DnaK (639 aa).

Phosphothreonine; by autocatalysis is present on T199. The segment covering 602 to 613 has biased composition (low complexity); the sequence is AQAQQAAAGAEG. A disordered region spans residues 602 to 639; the sequence is AQAQQAAAGAEGQPEDASAKQDDDVVDAEFEEVKDDKK. The segment covering 625 to 639 has biased composition (acidic residues); sequence DVVDAEFEEVKDDKK.

It belongs to the heat shock protein 70 family.

Acts as a chaperone. The polypeptide is Chaperone protein DnaK (Pseudoalteromonas atlantica (strain T6c / ATCC BAA-1087)).